The chain runs to 264 residues: uncharacterized protein (264 aa).

3 stretches are compositionally biased toward polar residues: residues 1–18 (MFENLNTALTPKLQSSRS), 73–83 (SLGSVGTTEVN), and 126–139 (KTTQDMLISSQPVL). Disordered regions lie at residues 1 to 47 (MFEN…WVGS) and 68 to 264 (RKEP…LSFE). The span at 149–171 (SSGQPQVSSSAQPSPADASQPEA) shows a compositional bias: low complexity. Residues 194 to 212 (LIHKDGQDDPKLKVTECRR) show a composition bias toward basic and acidic residues. Phosphoserine is present on residues S214, S215, S241, and S250.

This is an uncharacterized protein from Bos taurus (Bovine).